Reading from the N-terminus, the 436-residue chain is MAVTVETLEKLERKMTLTLPVGIVESEVQSRLKKLARTIKMDGFRPGKVPMNVVSQRYGYSVHYEVMNDKVGEAFFNAANEAKLRVAGQPRISESEASPEGEMAFDAVFEVYPDVKIGDLSTAEVEKISAEVTDSAIDKTVDILRKQRRTFSQRPHDAAAQDGDRVTVDFEGKIDGEVFAGGKAEDFQFIVGDGQMLKEFEEATRGMKSGESKTFQMAFPADYHGKDVAGKTADFMVTLKKIEAAHLPDVDGALAKSLGIEDATVEGLRADIKKNLAREVKARLLARNKQAVMDALVGKAELDLPNASVQAEVNRLMEGARADLKQRGIKDADKAPMPEDIFRPQAERRVRLGLVVAELVRSNNLQATPEQVKAHIEELAASYEKPADVMRWYYSDNNRLAEVEAIVIENNVTNFVLAQAKVSDKALSFDELMAQN.

Positions 163-248 (GDRVTVDFEG…LKKIEAAHLP (86 aa)) constitute a PPIase FKBP-type domain.

It belongs to the FKBP-type PPIase family. Tig subfamily.

The protein localises to the cytoplasm. It catalyses the reaction [protein]-peptidylproline (omega=180) = [protein]-peptidylproline (omega=0). Involved in protein export. Acts as a chaperone by maintaining the newly synthesized protein in an open conformation. Functions as a peptidyl-prolyl cis-trans isomerase. In Albidiferax ferrireducens (strain ATCC BAA-621 / DSM 15236 / T118) (Rhodoferax ferrireducens), this protein is Trigger factor.